The following is a 351-amino-acid chain: THO complex subunit 3 (351 aa).

The interval 1-20 (MAVPAAAMGPSALGQSGPGS) is disordered. An N-acetylalanine modification is found at A2. WD repeat units follow at residues 53 to 94 (AHSA…KENN), 97 to 137 (GHGD…CIAT), 139 to 178 (NTKGENINICWSPDGQTIAVGNKDDVVTFIDAKTHRSKAE), 180 to 221 (QFKF…QSIN), 222 to 261 (AHPSNCICIKFDPMGKYFATGSADALVSLWDVDELVCVRC), and 264 to 303 (RLDWPVRTLSFSHDGKMLASASEDHFIDIAEVETGDKLWE).

The protein belongs to the THOC3 family. In terms of assembly, component of the THO subcomplex, which is composed of THOC1, THOC2, THOC3, THOC5, THOC6 and THOC7. The THO subcomplex interacts with DDX39B to form the THO-DDX39B complex which multimerizes into a 28-subunit tetrameric assembly. Component of the transcription/export (TREX) complex at least composed of ALYREF/THOC4, DDX39B, SARNP/CIP29, CHTOP and the THO subcomplex; in the complex interacts with THOC2. TREX seems to have a dynamic structure involving ATP-dependent remodeling.

The protein resides in the nucleus. Its subcellular location is the nucleus speckle. Functionally, component of the THO subcomplex of the TREX complex which is thought to couple mRNA transcription, processing and nuclear export, and which specifically associates with spliced mRNA and not with unspliced pre-mRNA. Required for efficient export of polyadenylated RNA and spliced mRNA. The THOC1-THOC2-THOC3 core complex alone is sufficient to bind export factor NXF1-NXT1 and promote ATPase activity of DDX39B. TREX is recruited to spliced mRNAs by a transcription-independent mechanism, binds to mRNA upstream of the exon-junction complex (EJC) and is recruited in a splicing- and cap-dependent manner to a region near the 5' end of the mRNA where it functions in mRNA export to the cytoplasm via the TAP/NXF1 pathway. In terms of biological role, (Microbial infection) The TREX complex is essential for the export of Kaposi's sarcoma-associated herpesvirus (KSHV) intronless mRNAs and infectious virus production. The chain is THO complex subunit 3 (THOC3) from Homo sapiens (Human).